The sequence spans 139 residues: Plasmid stability protein StbB (139 aa).

The PINc domain maps to 2 to 136; sequence ILLDTNVISE…EAAGLNVINP (135 aa). Mg(2+) contacts are provided by aspartate 5 and aspartate 104.

Belongs to the PINc/VapC protein family. Mg(2+) is required as a cofactor.

Functionally, toxic component of a type II toxin-antitoxin (TA) system. An RNase. Involved in plasmid stability. The chain is Plasmid stability protein StbB (stbB) from Pseudomonas syringae pv. tomato (strain ATCC BAA-871 / DC3000).